The primary structure comprises 657 residues: tRNA 5-methylaminomethyl-2-thiouridine biosynthesis bifunctional protein MnmC (657 aa).

The tract at residues M1–A239 is tRNA (mnm(5)s(2)U34)-methyltransferase. The FAD-dependent cmnm(5)s(2)U34 oxidoreductase stretch occupies residues I263–A657.

The protein in the N-terminal section; belongs to the methyltransferase superfamily. tRNA (mnm(5)s(2)U34)-methyltransferase family. In the C-terminal section; belongs to the DAO family. FAD serves as cofactor.

It is found in the cytoplasm. It catalyses the reaction 5-aminomethyl-2-thiouridine(34) in tRNA + S-adenosyl-L-methionine = 5-methylaminomethyl-2-thiouridine(34) in tRNA + S-adenosyl-L-homocysteine + H(+). Functionally, catalyzes the last two steps in the biosynthesis of 5-methylaminomethyl-2-thiouridine (mnm(5)s(2)U) at the wobble position (U34) in tRNA. Catalyzes the FAD-dependent demodification of cmnm(5)s(2)U34 to nm(5)s(2)U34, followed by the transfer of a methyl group from S-adenosyl-L-methionine to nm(5)s(2)U34, to form mnm(5)s(2)U34. The chain is tRNA 5-methylaminomethyl-2-thiouridine biosynthesis bifunctional protein MnmC from Burkholderia pseudomallei (strain 668).